Here is a 111-residue protein sequence, read N- to C-terminus: Phosphoribosyl-ATP pyrophosphatase (111 aa).

It belongs to the PRA-PH family.

Its subcellular location is the cytoplasm. The catalysed reaction is 1-(5-phospho-beta-D-ribosyl)-ATP + H2O = 1-(5-phospho-beta-D-ribosyl)-5'-AMP + diphosphate + H(+). It participates in amino-acid biosynthesis; L-histidine biosynthesis; L-histidine from 5-phospho-alpha-D-ribose 1-diphosphate: step 2/9. The chain is Phosphoribosyl-ATP pyrophosphatase from Pseudomonas putida (strain W619).